Reading from the N-terminus, the 289-residue chain is Glucosamine-6-phosphate deaminase 1 (289 aa).

Lys-64 carries the N6-acetyllysine modification. The Proton acceptor; for enolization step role is filled by Asp-72. The active-site For ring-opening step is Asp-141. His-143 acts as the Proton acceptor; for ring-opening step in catalysis. Glu-148 serves as the catalytic For ring-opening step. A Phosphothreonine modification is found at Thr-161.

It belongs to the glucosamine/galactosamine-6-phosphate isomerase family. As to quaternary structure, homohexamer.

Its subcellular location is the cytoplasm. It catalyses the reaction alpha-D-glucosamine 6-phosphate + H2O = beta-D-fructose 6-phosphate + NH4(+). Its pathway is nucleotide-sugar biosynthesis; UDP-N-acetyl-alpha-D-glucosamine biosynthesis; alpha-D-glucosamine 6-phosphate from D-fructose 6-phosphate: step 1/1. With respect to regulation, allosterically activated by N-acetylglucosamine-6-phosphate (GlcNAc6P). Catalyzes the reversible conversion of alpha-D-glucosamine 6-phosphate (GlcN-6P) into beta-D-fructose 6-phosphate (Fru-6P) and ammonium ion, a regulatory reaction step in de novo uridine diphosphate-N-acetyl-alpha-D-glucosamine (UDP-GlcNAc) biosynthesis via hexosamine pathway. Deamination is coupled to aldo-keto isomerization mediating the metabolic flux from UDP-GlcNAc toward Fru-6P. At high ammonium level can drive amination and isomerization of Fru-6P toward hexosamines and UDP-GlcNAc synthesis. Has a role in fine tuning the metabolic fluctuations of cytosolic UDP-GlcNAc and their effects on hyaluronan synthesis that occur during tissue remodeling. Seems to trigger calcium oscillations in mammalian eggs. These oscillations serve as the essential trigger for egg activation and early development of the embryo. This chain is Glucosamine-6-phosphate deaminase 1, found in Bos taurus (Bovine).